Reading from the N-terminus, the 543-residue chain is Protein GPR108 (543 aa).

The first 32 residues, 1-32 (MAVSERRGLGRGSPAEWGQRLLLVLLLGGCSG), serve as a signal peptide directing secretion. 2 N-linked (GlcNAc...) asparagine glycosylation sites follow: N57 and N109. Residues 149–186 (SKPGLPKPQATVPRKVDGGGTSAASKPKSTPAVIQGPS) form a disordered region. Residues N200, N204, and N228 are each glycosylated (N-linked (GlcNAc...) asparagine). 7 consecutive transmembrane segments (helical) span residues 263–283 (LYMVMSACFLAAGIFWVSILC), 292–312 (IHWLMAALAFTKSISLLFHSI), 336–356 (LLKGALLFITIALIGSGWAFI), 367–387 (VFGIVIPMQVLANVAYIIIES), 401–421 (ILFLVDLICCGAILFPVVWSI), 449–469 (VMVICYVYFTRIIAILLQVAV), and 473–493 (WQWLYQLLVEGSTLAFFVLTG). N-linked (GlcNAc...) asparagine glycosylation occurs at N534.

This sequence belongs to the LU7TM family.

The protein resides in the golgi apparatus. It is found in the cis-Golgi network membrane. Its subcellular location is the trans-Golgi network membrane. It localises to the golgi apparatus membrane. May play a role in intracellular immune modulation by activating NF-kappaB response and attenuating Toll-like-receptor response. Functionally, (Microbial infection) Plays an essential function in adeno-associated virus (AAV) transduction across multiple serotypes except AAV5. May play a critical role in mediating the endosomal virus escape or in the AAV virions trafficking from endosomes to the nucleus. The protein is Protein GPR108 of Homo sapiens (Human).